An 802-amino-acid polypeptide reads, in one-letter code: Post-transcriptional regulator mkt1 (802 aa).

Phosphoserine occurs at positions 227, 228, and 230.

The protein belongs to the XPG/RAD2 endonuclease family. Interacts with pab1 binding protein ath1.

Functionally, involved in post-transcriptional regulation of gene expression by 3'-UTR-mediated RNA regulation. Promotes interactions between mRNA and poly(A)-binding protein. Binds the 3' UTR of mRNAs, centromeric transcripts and antisense-rDNA. Required for the establishment but not the maintenance of heterochromatin at pericentromeres, and for the maintenance of small domains of facultative heterochromatin known as HOODs. The protein is Post-transcriptional regulator mkt1 of Schizosaccharomyces pombe (strain 972 / ATCC 24843) (Fission yeast).